The following is a 792-amino-acid chain: MNLQLTLISLLFFTSAIAETFKNLDSHPQFPCKPPHFSSYPFCNVSLSIKQRAISLVSLLMLPEKIGQLSNTAASVPRLGIPPYEWWSESLHGLADNGPGVSFNGSISAATSFPQVIVSAASFNRTLWYEIGSAVAVEGRAMYNGGQAGLTFWAPNINVFRDPRWGRGQETPGEDPKVVSEYGVEFVRGFQEKKKRKVLKRRFSDDVDDDRHDDDADGKLMLSACCKHFTAYDLEKWGNFTRYDFNAVVTEQDMEDTYQPPFETCIRDGKASCLMCSYNAVNGVPACAQGDLLQKARVEWGFEGYITSDCDAVATIFAYQGYTKSPEEAVADAIKAGVDINCGTYMLRHTQSAIEQGKVSEELVDRALLNLFAVQLRLGLFDGDPRRGQYGKLGSNDICSSDHRKLALEATRQGIVLLKNDHKLLPLNKNHVSSLAIVGPMANNISNMGGTYTGKPCQRKTLFTELLEYVKKTSYASGCSDVSCDSDTGFGEAVAIAKGADFVIVVAGLDLSQETEDKDRVSLSLPGKQKDLVSHVAAVSKKPVILVLTGGGPVDVTFAKNDPRIGSIIWIGYPGETGGQALAEIIFGDFNPGGRLPTTWYPESFTDVAMSDMHMRANSSRGYPGRTYRFYTGPQVYSFGTGLSYTKFEYKILSAPIRLSLSELLPQQSSHKKQLQHGEELRYLQLDDVIVNSCESLRFNVRVHVSNTGEIDGSHVVMLFSKMPPVLSGVPEKQLIGYDRVHVRSNEMMETVFVIDPCKQLSVANDVGKRVIPLGSHVLFLGDLQHSLSVEF.

Positions 1-18 (MNLQLTLISLLFFTSAIA) are cleaved as a signal peptide. 4 N-linked (GlcNAc...) asparagine glycosylation sites follow: Asn-44, Asn-104, Asn-124, and Asn-239. Asp-309 is an active-site residue. Residues Asn-444 and Asn-618 are each glycosylated (N-linked (GlcNAc...) asparagine).

It belongs to the glycosyl hydrolase 3 family.

It localises to the secreted. It is found in the extracellular space. Its subcellular location is the extracellular matrix. This Arabidopsis thaliana (Mouse-ear cress) protein is Probable beta-D-xylosidase 6 (BXL6).